Reading from the N-terminus, the 69-residue chain is Putative membrane protein insertion efficiency factor (69 aa).

Belongs to the UPF0161 family.

The protein resides in the cell membrane. Its function is as follows. Could be involved in insertion of integral membrane proteins into the membrane. This chain is Putative membrane protein insertion efficiency factor, found in Clostridium beijerinckii (strain ATCC 51743 / NCIMB 8052) (Clostridium acetobutylicum).